A 557-amino-acid polypeptide reads, in one-letter code: Dihydroxy-acid dehydratase (557 aa).

Cysteine 50 contributes to the [2Fe-2S] cluster binding site. Aspartate 82 contacts Mg(2+). Cysteine 123 is a [2Fe-2S] cluster binding site. Residues aspartate 124 and lysine 125 each coordinate Mg(2+). N6-carboxylysine is present on lysine 125. Cysteine 195 serves as a coordination point for [2Fe-2S] cluster. Glutamate 447 serves as a coordination point for Mg(2+). The Proton acceptor role is filled by serine 473.

It belongs to the IlvD/Edd family. In terms of assembly, homodimer. Requires [2Fe-2S] cluster as cofactor. The cofactor is Mg(2+).

It carries out the reaction (2R)-2,3-dihydroxy-3-methylbutanoate = 3-methyl-2-oxobutanoate + H2O. The catalysed reaction is (2R,3R)-2,3-dihydroxy-3-methylpentanoate = (S)-3-methyl-2-oxopentanoate + H2O. It participates in amino-acid biosynthesis; L-isoleucine biosynthesis; L-isoleucine from 2-oxobutanoate: step 3/4. The protein operates within amino-acid biosynthesis; L-valine biosynthesis; L-valine from pyruvate: step 3/4. In terms of biological role, functions in the biosynthesis of branched-chain amino acids. Catalyzes the dehydration of (2R,3R)-2,3-dihydroxy-3-methylpentanoate (2,3-dihydroxy-3-methylvalerate) into 2-oxo-3-methylpentanoate (2-oxo-3-methylvalerate) and of (2R)-2,3-dihydroxy-3-methylbutanoate (2,3-dihydroxyisovalerate) into 2-oxo-3-methylbutanoate (2-oxoisovalerate), the penultimate precursor to L-isoleucine and L-valine, respectively. This chain is Dihydroxy-acid dehydratase, found in Burkholderia mallei (strain NCTC 10247).